The following is a 138-amino-acid chain: Biopolymer transport protein exbD1 (138 aa).

At 1–16 the chain is on the cytoplasmic side; it reads MIKSSAKHNDFGLTPD. Residues 17-37 form a helical membrane-spanning segment; sequence LTPLLDIIFIVMVFLLLTASV. Residues 38–138 lie on the Periplasmic side of the membrane; that stretch reads RLESLEVALP…TQLLTEPSHS (101 aa).

This sequence belongs to the ExbD/TolR family. In terms of assembly, the accessory proteins ExbB and ExbD seem to form a complex with TonB.

The protein localises to the cell inner membrane. Involved in the TonB-dependent energy-dependent transport of various receptor-bound substrates. The sequence is that of Biopolymer transport protein exbD1 (exbD1) from Vibrio cholerae serotype O1 (strain ATCC 39315 / El Tor Inaba N16961).